The sequence spans 188 residues: Grand meiotic recombination cluster protein 2 (188 aa).

Composition is skewed to polar residues over residues Met1–Glu13 and Glu21–Val31. The interval Met1–Val31 is disordered.

Functionally, probable transcriptional activator involved in meiotic prophase and synaptonemal complex (SC) assembly. The chain is Grand meiotic recombination cluster protein 2 (GMC2) from Saccharomyces cerevisiae (strain ATCC 204508 / S288c) (Baker's yeast).